Reading from the N-terminus, the 387-residue chain is Carbamoyl phosphate synthase small chain (387 aa).

Residues 1-196 (MEGVLSQLAV…FSINKQKFLF (196 aa)) are CPSase. Positions 51, 245, and 247 each coordinate L-glutamine. A Glutamine amidotransferase type-1 domain is found at 197-384 (HVVVYDFGVK…IKLIVSQKTT (188 aa)). Residue C273 is the Nucleophile of the active site. The L-glutamine site is built by L274, Q277, N315, and F318. Residues H357 and E359 contribute to the active site.

This sequence belongs to the CarA family. Composed of two chains; the small (or glutamine) chain promotes the hydrolysis of glutamine to ammonia, which is used by the large (or ammonia) chain to synthesize carbamoyl phosphate. Tetramer of heterodimers (alpha,beta)4.

The catalysed reaction is hydrogencarbonate + L-glutamine + 2 ATP + H2O = carbamoyl phosphate + L-glutamate + 2 ADP + phosphate + 2 H(+). It carries out the reaction L-glutamine + H2O = L-glutamate + NH4(+). The protein operates within amino-acid biosynthesis; L-arginine biosynthesis; carbamoyl phosphate from bicarbonate: step 1/1. It functions in the pathway pyrimidine metabolism; UMP biosynthesis via de novo pathway; (S)-dihydroorotate from bicarbonate: step 1/3. Small subunit of the glutamine-dependent carbamoyl phosphate synthetase (CPSase). CPSase catalyzes the formation of carbamoyl phosphate from the ammonia moiety of glutamine, carbonate, and phosphate donated by ATP, constituting the first step of 2 biosynthetic pathways, one leading to arginine and/or urea and the other to pyrimidine nucleotides. The small subunit (glutamine amidotransferase) binds and cleaves glutamine to supply the large subunit with the substrate ammonia. The polypeptide is Carbamoyl phosphate synthase small chain (Buchnera aphidicola subsp. Acyrthosiphon pisum (strain APS) (Acyrthosiphon pisum symbiotic bacterium)).